We begin with the raw amino-acid sequence, 1099 residues long: MGKLIRMGPQERWLLRTKRLHWSRLLFLLGMLIIGSTYQHLRRPRGLSSLWAAVSSHQPIKLASRDLSSEEMMMMSSSPSKPSSEMGGKMLVPQASVGSDEATLSMTVENIPSMPKRTAKMIPTTTKNNYSPTAAGTERRKEDTPTSSRTLTYYTSTSSRQIVKKYTPTPRGEMKSYSPTQVREKVKYTPSPRGRRVGTYVPSTFMTMETSHAITPRTTVKDSDITATYKILETNSLKRIMEETTPTTLKGMFDSTPTFLTHEVEANVLTSPRSVMEKNNLFPPRRVESNSSAHPWGLVGKSNPKTPQGTVLLHTPATSEGQVTISTMTGSSPAETKAFTAAWSLRNPSPRTSVSAIKTAPAIVWRLAKKPSTAPSTSTTPTVRAKLTMQVHHCVVVKPTPAMLTTPSPSLTTALLPEELSPSPSVLPPSLPDLHPKGEYPPDLFSVEERRQGWVVLHVFGMMYVFVALAIVCDEYFVPALGVITDKLQISEDVAGATFMAAGGSAPELFTSLIGVFISHSNVGIGTIVGSAVFNILFVIGTCSLFSREILNLTWWPLFRDVSFYILDLIMLILFFLDSLIAWWESLLLLLAYAFYVFTMKWNKHIEVWVKEQLSRRPVAKVMALEDLSKPGDGAIAVDELQDNKKLKLPSLLTRGSSSTSLHNSTIRSTIYQLMLHSLDPLREVRLAKEKEEESLNQGARAQPQAKAESKPEEEEPAKLPAVTVTPAPVPDIKGDQKENPGGQEDVAEAESTGEMPGEEGETAGEGETEEKSGGETQPEGEGETETQGKGEECEDENEAEGKGDNEGEDEGEIHAEDGEMKGNEGETESQELSAENHGEAKNDEKGVEDGGGSDGGDSEEEEEEEEEQEEEEEEEEQEEEEEEEEEEEEKGNEEPLSLDWPETRQKQAIYLFLLPIVFPLWLTVPDVRRQESRKFFVFTFLGSIMWIAMFSYLMVWWAHQVGETIGISEEIMGLTILAAGTSIPDLITSVIVARKGLGDMAVSSSVGSNIFDITVGLPVPWLLFSLINGLQPVPVSSNGLFCAIVLLFLMLLFVISSIASCKWRMNKILGFTMFLLYFVFLIISVMLEDRIISCPVSV.

The Extracellular portion of the chain corresponds to 1 to 452 (MGKLIRMGPQ…DLFSVEERRQ (452 aa)). Residues 123-134 (PTTTKNNYSPTA) are compositionally biased toward polar residues. Disordered regions lie at residues 123 to 150 (PTTT…SSRT), 169 to 199 (TPRG…RVGT), and 284 to 304 (PRRV…KSNP). N-linked (GlcNAc...) asparagine glycosylation is present at N290. A helical transmembrane segment spans residues 453-473 (GWVVLHVFGMMYVFVALAIVC). Residues 474 to 497 (DEYFVPALGVITDKLQISEDVAGA) are Cytoplasmic-facing. An Alpha-1 repeat occupies 494–534 (VAGATFMAAGGSAPELFTSLIGVFISHSNVGIGTIVGSAVF). Residues 498–518 (TFMAAGGSAPELFTSLIGVFI) traverse the membrane as a helical segment. Residues 519 to 522 (SHSN) lie on the Extracellular side of the membrane. Residues 523-543 (VGIGTIVGSAVFNILFVIGTC) form a helical membrane-spanning segment. The Cytoplasmic segment spans residues 544 to 563 (SLFSREILNLTWWPLFRDVS). The chain crosses the membrane as a helical span at residues 564-584 (FYILDLIMLILFFLDSLIAWW). Position 585 (E585) is a topological domain, extracellular. Residues 586–606 (SLLLLLAYAFYVFTMKWNKHI) form a helical membrane-spanning segment. Over 607–907 (EVWVKEQLSR…SLDWPETRQK (301 aa)) the chain is Cytoplasmic. Residue S658 is modified to Phosphoserine. Residues 690-901 (EKEEESLNQG…GNEEPLSLDW (212 aa)) form a disordered region. The residue at position 724 (T724) is a Phosphothreonine. Residues 757-769 (PGEEGETAGEGET) show a composition bias toward acidic residues. Composition is skewed to basic and acidic residues over residues 813–825 (EIHA…KGNE) and 835–849 (AENH…KGVE). Over residues 857–892 (GDSEEEEEEEEEQEEEEEEEEQEEEEEEEEEEEEKG) the composition is skewed to acidic residues. Residues 908-928 (QAIYLFLLPIVFPLWLTVPDV) form a helical membrane-spanning segment. Topologically, residues 929-935 (RRQESRK) are extracellular. Residues 936–956 (FFVFTFLGSIMWIAMFSYLMV) traverse the membrane as a helical segment. Residues 957 to 971 (WWAHQVGETIGISEE) lie on the Cytoplasmic side of the membrane. The chain crosses the membrane as a helical span at residues 972–992 (IMGLTILAAGTSIPDLITSVI). One copy of the Alpha-2 repeat lies at 979-1010 (AAGTSIPDLITSVIVARKGLGDMAVSSSVGSN). Residues 993 to 1010 (VARKGLGDMAVSSSVGSN) lie on the Extracellular side of the membrane. A helical membrane pass occupies residues 1011–1031 (IFDITVGLPVPWLLFSLINGL). The Cytoplasmic segment spans residues 1032 to 1039 (QPVPVSSN). Residues 1040–1060 (GLFCAIVLLFLMLLFVISSIA) form a helical membrane-spanning segment. Topologically, residues 1061-1068 (SCKWRMNK) are extracellular. The helical transmembrane segment at 1069-1089 (ILGFTMFLLYFVFLIISVMLE) threads the bilayer. Residues 1090–1099 (DRIISCPVSV) lie on the Cytoplasmic side of the membrane.

Belongs to the Ca(2+):cation antiporter (CaCA) (TC 2.A.19) family. SLC24A subfamily. In terms of processing, the uncleaved signal sequence is required for efficient membrane targeting and proper membrane integration. Expressed in the retina, particularly in the inner segment, outer and inner nuclear layers, and ganglion cell layer.

Its subcellular location is the cell membrane. It carries out the reaction Ca(2+)(out) + K(+)(out) + 4 Na(+)(in) = Ca(2+)(in) + K(+)(in) + 4 Na(+)(out). Functionally, calcium, potassium:sodium antiporter that transports 1 Ca(2+) and 1 K(+) in exchange for 4 Na(+). Critical component of the visual transduction cascade, controlling the calcium concentration of outer segments during light and darkness. Light causes a rapid lowering of cytosolic free calcium in the outer segment of both retinal rod and cone photoreceptors and the light-induced lowering of calcium is caused by extrusion via this protein which plays a key role in the process of light adaptation. The polypeptide is Sodium/potassium/calcium exchanger 1 (Homo sapiens (Human)).